A 100-amino-acid chain; its full sequence is Aspartyl/glutamyl-tRNA(Asn/Gln) amidotransferase subunit C (100 aa).

Belongs to the GatC family. In terms of assembly, heterotrimer of A, B and C subunits.

It catalyses the reaction L-glutamyl-tRNA(Gln) + L-glutamine + ATP + H2O = L-glutaminyl-tRNA(Gln) + L-glutamate + ADP + phosphate + H(+). It carries out the reaction L-aspartyl-tRNA(Asn) + L-glutamine + ATP + H2O = L-asparaginyl-tRNA(Asn) + L-glutamate + ADP + phosphate + 2 H(+). Functionally, allows the formation of correctly charged Asn-tRNA(Asn) or Gln-tRNA(Gln) through the transamidation of misacylated Asp-tRNA(Asn) or Glu-tRNA(Gln) in organisms which lack either or both of asparaginyl-tRNA or glutaminyl-tRNA synthetases. The reaction takes place in the presence of glutamine and ATP through an activated phospho-Asp-tRNA(Asn) or phospho-Glu-tRNA(Gln). This chain is Aspartyl/glutamyl-tRNA(Asn/Gln) amidotransferase subunit C, found in Erythrobacter litoralis (strain HTCC2594).